Here is a 1361-residue protein sequence, read N- to C-terminus: DNA-directed RNA polymerase subunit beta (1361 aa).

Belongs to the RNA polymerase beta chain family. As to quaternary structure, the RNAP catalytic core consists of 2 alpha, 1 beta, 1 beta' and 1 omega subunit. When a sigma factor is associated with the core the holoenzyme is formed, which can initiate transcription.

The catalysed reaction is RNA(n) + a ribonucleoside 5'-triphosphate = RNA(n+1) + diphosphate. In terms of biological role, DNA-dependent RNA polymerase catalyzes the transcription of DNA into RNA using the four ribonucleoside triphosphates as substrates. The polypeptide is DNA-directed RNA polymerase subunit beta (Dichelobacter nodosus (strain VCS1703A)).